We begin with the raw amino-acid sequence, 215 residues long: MNVVLFGPPGAGKGTQAKELDKHYQIPHISTGDILRANVRDGTKLGKEAKGYMDKGELVPDEVLIGVIKNRLAESDCKPGYLLDGYPRTTPQADALSSILVEIGMPLEVVLNIDVADEELVTRLCGRYVCTCGESYHMKFNPPKKENVCDACGADLYQRDDDKEDVIRQRLDSYKEKTQPLISYYGEKGLLVDIDGTGAIDRIFSDICKTLDQYK.

10–15 is a binding site for ATP; it reads GAGKGT. Residues 30-59 are NMP; the sequence is STGDILRANVRDGTKLGKEAKGYMDKGELV. AMP is bound by residues Thr31, Arg36, 57 to 59, 85 to 88, and Gln92; these read ELV and GYPR. The tract at residues 126–162 is LID; sequence GRYVCTCGESYHMKFNPPKKENVCDACGADLYQRDDD. Arg127 serves as a coordination point for ATP. 2 residues coordinate Zn(2+): Cys130 and Cys132. 135 to 136 is a binding site for ATP; the sequence is SY. Zn(2+) contacts are provided by Cys149 and Cys152. The AMP site is built by Arg159 and Arg170. An ATP-binding site is contributed by Gly198.

This sequence belongs to the adenylate kinase family. Monomer.

The protein localises to the cytoplasm. It catalyses the reaction AMP + ATP = 2 ADP. It functions in the pathway purine metabolism; AMP biosynthesis via salvage pathway; AMP from ADP: step 1/1. Its function is as follows. Catalyzes the reversible transfer of the terminal phosphate group between ATP and AMP. Plays an important role in cellular energy homeostasis and in adenine nucleotide metabolism. This chain is Adenylate kinase, found in Methanococcoides burtonii (strain DSM 6242 / NBRC 107633 / OCM 468 / ACE-M).